We begin with the raw amino-acid sequence, 208 residues long: Putative ribosomal protein uS2-like (208 aa).

This sequence belongs to the universal ribosomal protein uS2 family.

Its subcellular location is the plastid. The protein localises to the chloroplast. The sequence is that of Putative ribosomal protein uS2-like (rps2-2) from Chlamydomonas reinhardtii (Chlamydomonas smithii).